Reading from the N-terminus, the 233-residue chain is tRNA (guanine-N(7)-)-methyltransferase (233 aa).

The interval 1 to 22 (MIDENHPMRAAGNFFGRRHGKP) is disordered. 4 residues coordinate S-adenosyl-L-methionine: Glu64, Glu89, Asp116, and Asp138. Asp138 is a catalytic residue. Substrate is bound by residues Lys142, Asp174, and 212 to 215 (TRYE).

The protein belongs to the class I-like SAM-binding methyltransferase superfamily. TrmB family.

It catalyses the reaction guanosine(46) in tRNA + S-adenosyl-L-methionine = N(7)-methylguanosine(46) in tRNA + S-adenosyl-L-homocysteine. It participates in tRNA modification; N(7)-methylguanine-tRNA biosynthesis. Its function is as follows. Catalyzes the formation of N(7)-methylguanine at position 46 (m7G46) in tRNA. The sequence is that of tRNA (guanine-N(7)-)-methyltransferase from Brucella abortus (strain 2308).